Here is a 279-residue protein sequence, read N- to C-terminus: Energy-coupling factor transporter ATP-binding protein EcfA1 (279 aa).

An ABC transporter domain is found at Ile5–Asp240. Gly40 to Ser47 is a binding site for ATP.

It belongs to the ABC transporter superfamily. Energy-coupling factor EcfA family. Forms a stable energy-coupling factor (ECF) transporter complex composed of 2 membrane-embedded substrate-binding proteins (S component), 2 ATP-binding proteins (A component) and 2 transmembrane proteins (T component).

The protein resides in the cell membrane. In terms of biological role, ATP-binding (A) component of a common energy-coupling factor (ECF) ABC-transporter complex. Unlike classic ABC transporters this ECF transporter provides the energy necessary to transport a number of different substrates. This chain is Energy-coupling factor transporter ATP-binding protein EcfA1, found in Streptococcus pyogenes serotype M5 (strain Manfredo).